The following is a 282-amino-acid chain: tRNA (guanine-N(1)-)-methyltransferase (282 aa).

The segment at 77-114 is disordered; sequence TGPAATVSDLESSAEHKRNLRPATTNGDAEPLGEKAGG. Residues Gly-149 and 173–178 contribute to the S-adenosyl-L-methionine site; that span reads IGDYVL.

It belongs to the RNA methyltransferase TrmD family. Homodimer.

It localises to the cytoplasm. It catalyses the reaction guanosine(37) in tRNA + S-adenosyl-L-methionine = N(1)-methylguanosine(37) in tRNA + S-adenosyl-L-homocysteine + H(+). Its function is as follows. Specifically methylates guanosine-37 in various tRNAs. This Corynebacterium jeikeium (strain K411) protein is tRNA (guanine-N(1)-)-methyltransferase.